Reading from the N-terminus, the 210-residue chain is Large ribosomal subunit protein uL3 (210 aa).

This sequence belongs to the universal ribosomal protein uL3 family. Part of the 50S ribosomal subunit. Forms a cluster with proteins L14 and L19.

One of the primary rRNA binding proteins, it binds directly near the 3'-end of the 23S rRNA, where it nucleates assembly of the 50S subunit. The sequence is that of Large ribosomal subunit protein uL3 from Pseudothermotoga lettingae (strain ATCC BAA-301 / DSM 14385 / NBRC 107922 / TMO) (Thermotoga lettingae).